Reading from the N-terminus, the 126-residue chain is Holo-[acyl-carrier-protein] synthase (126 aa).

Mg(2+)-binding residues include aspartate 6 and glutamate 55.

This sequence belongs to the P-Pant transferase superfamily. AcpS family. Requires Mg(2+) as cofactor.

Its subcellular location is the cytoplasm. The enzyme catalyses apo-[ACP] + CoA = holo-[ACP] + adenosine 3',5'-bisphosphate + H(+). Its function is as follows. Transfers the 4'-phosphopantetheine moiety from coenzyme A to a Ser of acyl-carrier-protein. The sequence is that of Holo-[acyl-carrier-protein] synthase from Chlorobium limicola (strain DSM 245 / NBRC 103803 / 6330).